Reading from the N-terminus, the 200-residue chain is Cuticle protein 21.3 (200 aa).

10 consecutive repeat copies span residues Ala-98–Ala-101, Ala-104–Ala-107, Ala-116–Ala-119, Ala-121–Ala-124, Ala-133–Ala-136, Ala-154–Ala-157, Ala-166–Ala-169, Ala-178–Ala-181, Ala-184–Ala-187, and Ala-196–Ala-199.

Its function is as follows. Component of the cuticle of migratory locust which contains more than 100 different structural proteins. The chain is Cuticle protein 21.3 from Locusta migratoria (Migratory locust).